The primary structure comprises 581 residues: Proline--tRNA ligase (581 aa).

Belongs to the class-II aminoacyl-tRNA synthetase family. ProS type 1 subfamily. In terms of assembly, homodimer.

It localises to the cytoplasm. The enzyme catalyses tRNA(Pro) + L-proline + ATP = L-prolyl-tRNA(Pro) + AMP + diphosphate. In terms of biological role, catalyzes the attachment of proline to tRNA(Pro) in a two-step reaction: proline is first activated by ATP to form Pro-AMP and then transferred to the acceptor end of tRNA(Pro). As ProRS can inadvertently accommodate and process non-cognate amino acids such as alanine and cysteine, to avoid such errors it has two additional distinct editing activities against alanine. One activity is designated as 'pretransfer' editing and involves the tRNA(Pro)-independent hydrolysis of activated Ala-AMP. The other activity is designated 'posttransfer' editing and involves deacylation of mischarged Ala-tRNA(Pro). The misacylated Cys-tRNA(Pro) is not edited by ProRS. The protein is Proline--tRNA ligase of Kosmotoga olearia (strain ATCC BAA-1733 / DSM 21960 / TBF 19.5.1).